A 356-amino-acid chain; its full sequence is Dual-specificity RNA methyltransferase RlmN (356 aa).

E92 serves as the catalytic Proton acceptor. The Radical SAM core domain maps to 98-334 (EKDRGTLCIS…MRRTRGEDID (237 aa)). C105 and C337 are joined by a disulfide. [4Fe-4S] cluster is bound by residues C112, C116, and C119. S-adenosyl-L-methionine is bound by residues 162-163 (GE), S194, 216-218 (SLH), and N294. Catalysis depends on C337, which acts as the S-methylcysteine intermediate.

It belongs to the radical SAM superfamily. RlmN family. Requires [4Fe-4S] cluster as cofactor.

The protein resides in the cytoplasm. It catalyses the reaction adenosine(2503) in 23S rRNA + 2 reduced [2Fe-2S]-[ferredoxin] + 2 S-adenosyl-L-methionine = 2-methyladenosine(2503) in 23S rRNA + 5'-deoxyadenosine + L-methionine + 2 oxidized [2Fe-2S]-[ferredoxin] + S-adenosyl-L-homocysteine. It carries out the reaction adenosine(37) in tRNA + 2 reduced [2Fe-2S]-[ferredoxin] + 2 S-adenosyl-L-methionine = 2-methyladenosine(37) in tRNA + 5'-deoxyadenosine + L-methionine + 2 oxidized [2Fe-2S]-[ferredoxin] + S-adenosyl-L-homocysteine. Its function is as follows. Specifically methylates position 2 of adenine 2503 in 23S rRNA and position 2 of adenine 37 in tRNAs. m2A2503 modification seems to play a crucial role in the proofreading step occurring at the peptidyl transferase center and thus would serve to optimize ribosomal fidelity. This chain is Dual-specificity RNA methyltransferase RlmN, found in Vesicomyosocius okutanii subsp. Calyptogena okutanii (strain HA).